The sequence spans 102 residues: Apolipoprotein A-II (102 aa).

The first 18 residues, 1-18 (MKLLAMVALLVTICSLEG), serve as a signal peptide directing secretion. The residue at position 49 (methionine 49) is a Methionine sulfoxide.

It belongs to the apolipoprotein A2 family. Monomer. Interacts with NAXE and NDRG1. As to expression, plasma.

The protein resides in the secreted. In terms of biological role, may stabilize HDL (high density lipoprotein) structure by its association with lipids, and affect the HDL metabolism. In Rattus norvegicus (Rat), this protein is Apolipoprotein A-II (Apoa2).